The following is a 385-amino-acid chain: Probable dual-specificity RNA methyltransferase RlmN (385 aa).

The interval 1 to 35 (MNVKEPAEEAAIQLRTERQRIEPEGEEQSEQPTDL) is disordered. E121 serves as the catalytic Proton acceptor. The Radical SAM core domain occupies 132 to 367 (TRDRVTVCLS…AVIREERGQD (236 aa)). Residues C139 and C372 are joined by a disulfide bond. Residues C146, C150, and C153 each contribute to the [4Fe-4S] cluster site. S-adenosyl-L-methionine-binding positions include 198 to 199 (GE), S230, 253 to 255 (SLH), and N329. C372 acts as the S-methylcysteine intermediate in catalysis.

Belongs to the radical SAM superfamily. RlmN family. It depends on [4Fe-4S] cluster as a cofactor.

It is found in the cytoplasm. The catalysed reaction is adenosine(2503) in 23S rRNA + 2 reduced [2Fe-2S]-[ferredoxin] + 2 S-adenosyl-L-methionine = 2-methyladenosine(2503) in 23S rRNA + 5'-deoxyadenosine + L-methionine + 2 oxidized [2Fe-2S]-[ferredoxin] + S-adenosyl-L-homocysteine. It catalyses the reaction adenosine(37) in tRNA + 2 reduced [2Fe-2S]-[ferredoxin] + 2 S-adenosyl-L-methionine = 2-methyladenosine(37) in tRNA + 5'-deoxyadenosine + L-methionine + 2 oxidized [2Fe-2S]-[ferredoxin] + S-adenosyl-L-homocysteine. In terms of biological role, specifically methylates position 2 of adenine 2503 in 23S rRNA and position 2 of adenine 37 in tRNAs. This Heliobacterium modesticaldum (strain ATCC 51547 / Ice1) protein is Probable dual-specificity RNA methyltransferase RlmN.